The sequence spans 292 residues: Phosphatidylglycerol--prolipoprotein diacylglyceryl transferase (292 aa).

Transmembrane regions (helical) follow at residues 18–38, 67–87, and 105–125; these read LFGV…GLLI, LLTW…VLFY, and GGMS…AFCL. Position 150 (Arg150) interacts with a 1,2-diacyl-sn-glycero-3-phospho-(1'-sn-glycerol). A run of 3 helical transmembrane segments spans residues 193–213, 222–242, and 266–286; these read QIYE…LLVW, GSVS…VEFV, and GLTM…YLIL.

This sequence belongs to the Lgt family.

The protein localises to the cell inner membrane. It carries out the reaction L-cysteinyl-[prolipoprotein] + a 1,2-diacyl-sn-glycero-3-phospho-(1'-sn-glycerol) = an S-1,2-diacyl-sn-glyceryl-L-cysteinyl-[prolipoprotein] + sn-glycerol 1-phosphate + H(+). Its pathway is protein modification; lipoprotein biosynthesis (diacylglyceryl transfer). Functionally, catalyzes the transfer of the diacylglyceryl group from phosphatidylglycerol to the sulfhydryl group of the N-terminal cysteine of a prolipoprotein, the first step in the formation of mature lipoproteins. The polypeptide is Phosphatidylglycerol--prolipoprotein diacylglyceryl transferase (Cereibacter sphaeroides (strain ATCC 17029 / ATH 2.4.9) (Rhodobacter sphaeroides)).